The chain runs to 372 residues: Protein Wnt-1 (372 aa).

The first 29 residues, 1-29 (MLKSTQVILIFILLISIVESLSWLALGLA), serve as a signal peptide directing secretion. Intrachain disulfides connect cysteine 77/cysteine 88, cysteine 130/cysteine 138, and cysteine 140/cysteine 158. A glycan (N-linked (GlcNAc...) asparagine) is linked at asparagine 87. The N-linked (GlcNAc...) asparagine glycan is linked to asparagine 187. Disulfide bonds link cysteine 225/cysteine 239, cysteine 227/cysteine 234, cysteine 301/cysteine 332, cysteine 317/cysteine 327, cysteine 331/cysteine 371, cysteine 347/cysteine 362, cysteine 349/cysteine 359, and cysteine 354/cysteine 355. A lipid anchor (O-palmitoleoyl serine; by mom-1) is attached at serine 231.

This sequence belongs to the Wnt family. In terms of processing, palmitoleoylation is required for efficient binding to frizzled receptors. Depalmitoleoylation leads to Wnt signaling pathway inhibition. As to expression, expressed in intestine, some head neurons and ventral nerve cord and pharyngeal neurons. Expressed in the tail and weakly expressed in the vulva and body wall muscles. Expressed highly in posterior dorsal and ventral muscle cells.

It localises to the secreted. Its subcellular location is the extracellular space. It is found in the extracellular matrix. The protein resides in the cytoplasm. The protein localises to the cell membrane. Ligand for members of the frizzled family of seven transmembrane receptors. Probable developmental protein. May be a signaling molecule which affects the development of discrete regions of tissues. Is likely to signal over only few cell diameters. Binds receptor tyrosine kinase cam-1. Together with Wnt ligand cwn-2, regulates the migration of CAN, ALM, BDU and HSN neurons during embryogenesis, the migration of QL and QR neuroblast descendants during larval development, and polarity of ALM neurons. Also acts with the Wnt ligand egl-20 to direct HSN neuron migration. Acts through the Wnt receptor cfz-2 to direct ALM migration. Also plays a role in axon growth and guidance in HSN and male CP neurons. In addition, together with Wnt ligand cwn-2, negatively regulates developmental neurite pruning of AIM neurons probably by acting as a ligand for receptor tyrosine kinase cam-1. Probably by activating the Wnt/Frizzled pathway, may regulate vulva development. May act redundantly with other Wnt ligands such as cwn-2 and mom-2 to control seam cell polarity. This is Protein Wnt-1 (cwn-1) from Caenorhabditis elegans.